A 529-amino-acid polypeptide reads, in one-letter code: Auxin response factor 13 (529 aa).

Positions 1 to 22 (MARPPAATAPPPPPPPPPPPPP) are disordered. Pro residues predominate over residues 7 to 22 (ATAPPPPPPPPPPPPP). Positions 128 to 234 (YAKQLTQSDA…KLLVGVRRAA (107 aa)) form a DNA-binding region, TF-B3. 2 disordered regions span residues 443-462 (IVTP…PLSA) and 497-529 (PEGV…GARL). The span at 444–461 (VTPQNGSPPDNPVNTPLS) shows a compositional bias: polar residues. Over residues 499–510 (GVDDETATEEAS) the composition is skewed to acidic residues. Polar residues predominate over residues 511–523 (DTSLPDSLTNGHN).

Belongs to the ARF family. Homo and heterodimers. As to expression, expressed in roots, culms, leaves and young panicles.

It localises to the nucleus. Auxin response factors (ARFs) are transcriptional factors that bind specifically to the DNA sequence 5'-TGTCTC-3' found in the auxin-responsive promoter elements (AuxREs). This is Auxin response factor 13 (ARF13) from Oryza sativa subsp. japonica (Rice).